We begin with the raw amino-acid sequence, 149 residues long: Calmodulin (149 aa).

4 consecutive EF-hand domains span residues 8–43 (EQIA…LGQN), 44–79 (PTEA…KMAD), 81–116 (DTEE…LGEK), and 117–149 (LSDE…MLSK). The Ca(2+) site is built by Asp21, Asp23, Asp25, Asn27, Glu32, Asp57, Asp59, Asn61, Thr63, Glu68, Asp94, Asp96, Asn98, and Glu105. The residue at position 116 (Lys116) is an N6,N6,N6-trimethyllysine. Positions 130, 132, 134, 136, and 141 each coordinate Ca(2+).

This sequence belongs to the calmodulin family.

Functionally, calmodulin mediates the control of a large number of enzymes, ion channels and other proteins by Ca(2+). Among the enzymes to be stimulated by the calmodulin-Ca(2+) complex are a number of protein kinases and phosphatases. The sequence is that of Calmodulin from Physarum polycephalum (Slime mold).